Reading from the N-terminus, the 156-residue chain is ATP synthase subunit b (156 aa).

The helical transmembrane segment at 3-23 threads the bilayer; sequence ITFTIFAQSLAFAALIWIVAT.

Belongs to the ATPase B chain family. As to quaternary structure, F-type ATPases have 2 components, F(1) - the catalytic core - and F(0) - the membrane proton channel. F(1) has five subunits: alpha(3), beta(3), gamma(1), delta(1), epsilon(1). F(0) has three main subunits: a(1), b(2) and c(10-14). The alpha and beta chains form an alternating ring which encloses part of the gamma chain. F(1) is attached to F(0) by a central stalk formed by the gamma and epsilon chains, while a peripheral stalk is formed by the delta and b chains.

The protein resides in the cell inner membrane. In terms of biological role, f(1)F(0) ATP synthase produces ATP from ADP in the presence of a proton or sodium gradient. F-type ATPases consist of two structural domains, F(1) containing the extramembraneous catalytic core and F(0) containing the membrane proton channel, linked together by a central stalk and a peripheral stalk. During catalysis, ATP synthesis in the catalytic domain of F(1) is coupled via a rotary mechanism of the central stalk subunits to proton translocation. Its function is as follows. Component of the F(0) channel, it forms part of the peripheral stalk, linking F(1) to F(0). This chain is ATP synthase subunit b, found in Xylella fastidiosa (strain M23).